The following is a 70-amino-acid chain: U2-agatoxin-Ao1b (70 aa).

The N-terminal stretch at 1 to 20 (MRAIISLILISAMVFSMIAA) is a signal peptide. Positions 21–34 (VPEEEGLQLSEDER) are excised as a propeptide. 3 disulfide bridges follow: Cys37/Cys53, Cys44/Cys58, and Cys52/Cys68. A Leucine amide modification is found at Leu69.

Belongs to the neurotoxin 01 (U2-agtx) family. Expressed by the venom gland.

It is found in the secreted. Functionally, insect active toxin causing rapid but reversible paralysis in crickets. No activity shown in mammals. Does not show effect on mammalian voltage-gated calcium channels. In Agelena orientalis (Funnel-web spider), this protein is U2-agatoxin-Ao1b.